The sequence spans 340 residues: DNA-directed RNA polymerase subunit alpha (340 aa).

The interval 1-236 is alpha N-terminal domain (alpha-NTD); the sequence is MLSLSKNWNT…EQLQLFIAFE (236 aa). The segment at 251–340 is alpha C-terminal domain (alpha-CTD); it reads FSPYLLKRVD…LSKRYEDSYN (90 aa).

This sequence belongs to the RNA polymerase alpha chain family. In terms of assembly, homodimer. The RNAP catalytic core consists of 2 alpha, 1 beta, 1 beta' and 1 omega subunit. When a sigma factor is associated with the core the holoenzyme is formed, which can initiate transcription.

It catalyses the reaction RNA(n) + a ribonucleoside 5'-triphosphate = RNA(n+1) + diphosphate. Functionally, DNA-dependent RNA polymerase catalyzes the transcription of DNA into RNA using the four ribonucleoside triphosphates as substrates. The protein is DNA-directed RNA polymerase subunit alpha of Rickettsia prowazekii (strain Madrid E).